Here is a 155-residue protein sequence, read N- to C-terminus: Small ribosomal subunit protein uS7 (155 aa).

The protein belongs to the universal ribosomal protein uS7 family. As to quaternary structure, part of the 30S ribosomal subunit. Contacts proteins S9 and S11.

Its function is as follows. One of the primary rRNA binding proteins, it binds directly to 16S rRNA where it nucleates assembly of the head domain of the 30S subunit. Is located at the subunit interface close to the decoding center, probably blocks exit of the E-site tRNA. This is Small ribosomal subunit protein uS7 from Sulfurovum sp. (strain NBC37-1).